We begin with the raw amino-acid sequence, 356 residues long: Arginine kinase Lit v 2.0101 (356 aa).

In terms of domain architecture, Phosphagen kinase N-terminal spans Lys9–Val91. Gly64–Tyr68 contributes to the L-arginine binding site. The Phosphagen kinase C-terminal domain occupies Phe119–Met356. Residues Ser122–Arg126 and His185 each bind ATP. Glu225 provides a ligand contact to L-arginine. An ATP-binding site is contributed by Arg229. Residue Cys271 coordinates L-arginine. ATP is bound by residues Arg280–His284 and Arg309–Glu314. Glu314 is an L-arginine binding site.

Belongs to the ATP:guanido phosphotransferase family. Monomer. As to expression, muscle (at protein level).

The enzyme catalyses L-arginine + ATP = N(omega)-phospho-L-arginine + ADP + H(+). The catalysed reaction is dTDP + ATP = dTTP + ADP. Its function is as follows. Catalyzes the reversible transfer of high energy ATP gamma-phosphate group to L-arginine. Has nucleoside diphosphate kinase-like activity toward dTDP. Binds and phosphorylates dTDP using ATP as a phosphate donor. Does not phosphorylate dADP, dCDP, dGDP, dTMP or thymidine. This is Arginine kinase Lit v 2.0101 from Penaeus vannamei (Whiteleg shrimp).